A 380-amino-acid chain; its full sequence is Flagellar P-ring protein (380 aa).

Residues 1-35 (MRFFTQSPFPLRTLTRRLTAFVCVGLLLLPGFTLA) form the signal peptide.

It belongs to the FlgI family. As to quaternary structure, the basal body constitutes a major portion of the flagellar organelle and consists of four rings (L,P,S, and M) mounted on a central rod.

It localises to the periplasm. It is found in the bacterial flagellum basal body. Functionally, assembles around the rod to form the L-ring and probably protects the motor/basal body from shearing forces during rotation. The chain is Flagellar P-ring protein from Gluconobacter oxydans (strain 621H) (Gluconobacter suboxydans).